The primary structure comprises 392 residues: Glutamyl-tRNA reductase (392 aa).

Residues T38–R41, S86, E91–Q93, and Q97 contribute to the substrate site. Catalysis depends on C39, which acts as the Nucleophile. NADP(+) is bound at residue G165–A170.

This sequence belongs to the glutamyl-tRNA reductase family. In terms of assembly, homodimer.

The enzyme catalyses (S)-4-amino-5-oxopentanoate + tRNA(Glu) + NADP(+) = L-glutamyl-tRNA(Glu) + NADPH + H(+). The protein operates within porphyrin-containing compound metabolism; protoporphyrin-IX biosynthesis; 5-aminolevulinate from L-glutamyl-tRNA(Glu): step 1/2. Catalyzes the NADPH-dependent reduction of glutamyl-tRNA(Glu) to glutamate 1-semialdehyde (GSA). This chain is Glutamyl-tRNA reductase, found in Methanocaldococcus jannaschii (strain ATCC 43067 / DSM 2661 / JAL-1 / JCM 10045 / NBRC 100440) (Methanococcus jannaschii).